Here is a 366-residue protein sequence, read N- to C-terminus: Putative transcription factor PHD1 (366 aa).

The HTH APSES-type domain maps to R186 to R292. Residues G220–E241 constitute a DNA-binding region (H-T-H motif). A disordered region spans residues P294 to S366. Over residues E312–S328 the composition is skewed to basic and acidic residues.

Belongs to the EFG1/PHD1/stuA family.

Its subcellular location is the nucleus. Putative transcription factor that functions in pseudohyphal growth. The polypeptide is Putative transcription factor PHD1 (PHD1) (Saccharomyces cerevisiae (strain ATCC 204508 / S288c) (Baker's yeast)).